We begin with the raw amino-acid sequence, 324 residues long: tRNA uridine(34) hydroxylase (324 aa).

The Rhodanese domain occupies 127-221 (QQEETIVIDA…YGKDPEVQGE (95 aa)). Cysteine 181 (cysteine persulfide intermediate) is an active-site residue.

It belongs to the TrhO family.

It carries out the reaction uridine(34) in tRNA + AH2 + O2 = 5-hydroxyuridine(34) in tRNA + A + H2O. In terms of biological role, catalyzes oxygen-dependent 5-hydroxyuridine (ho5U) modification at position 34 in tRNAs. The polypeptide is tRNA uridine(34) hydroxylase (Bacillus cytotoxicus (strain DSM 22905 / CIP 110041 / 391-98 / NVH 391-98)).